The following is a 34-amino-acid chain: uncharacterized protein (34 aa).

The helical transmembrane segment at 10-30 (LIITSSFFAIAAVLVLSVLLI) threads the bilayer.

It localises to the membrane. This is an uncharacterized protein from Escherichia coli O6:H1 (strain CFT073 / ATCC 700928 / UPEC).